Consider the following 449-residue polypeptide: Cyclin-B1-1 (449 aa).

Disordered regions lie at residues 1–34 and 90–143; these read MATRSQNVAAAPQPPQNRGNVAALGKQKAVVAGR and AVAP…SVRK. Low complexity-rich tracts occupy residues 90 to 102 and 121 to 134; these read AVAPAAVARPAQR and EISSDSDQSMRQQS.

It belongs to the cyclin family. Cyclin AB subfamily.

This Oryza sativa subsp. japonica (Rice) protein is Cyclin-B1-1 (CYCB1-1).